Consider the following 155-residue polypeptide: 6,7-dimethyl-8-ribityllumazine synthase (155 aa).

5-amino-6-(D-ribitylamino)uracil contacts are provided by residues Phe-23, 57-59 (AFE), and 81-83 (AVI). 86–87 (AT) contributes to the (2S)-2-hydroxy-3-oxobutyl phosphate binding site. The active-site Proton donor is the His-89. 5-amino-6-(D-ribitylamino)uracil is bound at residue Phe-114. Arg-128 is a binding site for (2S)-2-hydroxy-3-oxobutyl phosphate.

Belongs to the DMRL synthase family.

The catalysed reaction is (2S)-2-hydroxy-3-oxobutyl phosphate + 5-amino-6-(D-ribitylamino)uracil = 6,7-dimethyl-8-(1-D-ribityl)lumazine + phosphate + 2 H2O + H(+). Its pathway is cofactor biosynthesis; riboflavin biosynthesis; riboflavin from 2-hydroxy-3-oxobutyl phosphate and 5-amino-6-(D-ribitylamino)uracil: step 1/2. Catalyzes the formation of 6,7-dimethyl-8-ribityllumazine by condensation of 5-amino-6-(D-ribitylamino)uracil with 3,4-dihydroxy-2-butanone 4-phosphate. This is the penultimate step in the biosynthesis of riboflavin. This chain is 6,7-dimethyl-8-ribityllumazine synthase, found in Geotalea daltonii (strain DSM 22248 / JCM 15807 / FRC-32) (Geobacter daltonii).